The primary structure comprises 395 residues: S-adenosylmethionine synthase (395 aa).

His-16 lines the ATP pocket. Residue Asp-18 coordinates Mg(2+). A K(+)-binding site is contributed by Glu-44. L-methionine contacts are provided by Glu-57 and Gln-100. The interval 100 to 110 (QSPDIAQGVDR) is flexible loop. ATP-binding positions include 167-169 (DAK), 233-234 (RF), Asp-242, 248-249 (RK), Ala-265, and Lys-269. An L-methionine-binding site is contributed by Asp-242. An L-methionine-binding site is contributed by Lys-273.

Belongs to the AdoMet synthase family. As to quaternary structure, homotetramer; dimer of dimers. It depends on Mg(2+) as a cofactor. K(+) serves as cofactor.

It is found in the cytoplasm. It catalyses the reaction L-methionine + ATP + H2O = S-adenosyl-L-methionine + phosphate + diphosphate. The protein operates within amino-acid biosynthesis; S-adenosyl-L-methionine biosynthesis; S-adenosyl-L-methionine from L-methionine: step 1/1. Catalyzes the formation of S-adenosylmethionine (AdoMet) from methionine and ATP. The overall synthetic reaction is composed of two sequential steps, AdoMet formation and the subsequent tripolyphosphate hydrolysis which occurs prior to release of AdoMet from the enzyme. The protein is S-adenosylmethionine synthase of Burkholderia ambifaria (strain MC40-6).